Reading from the N-terminus, the 177-residue chain is Dual-action ribosomal maturation protein DarP (177 aa).

The tract at residues 1–26 is disordered; it reads MKIVGDSEHFKQPYDSDEEYVSKTED.

This sequence belongs to the DarP family.

The protein resides in the cytoplasm. Functionally, member of a network of 50S ribosomal subunit biogenesis factors which assembles along the 30S-50S interface, preventing incorrect 23S rRNA structures from forming. Promotes peptidyl transferase center (PTC) maturation. The sequence is that of Dual-action ribosomal maturation protein DarP from Shewanella sp. (strain ANA-3).